A 1409-amino-acid polypeptide reads, in one-letter code: Protein three rows (1409 aa).

Residues 1052–1058 (VEPIRKQ) are separase cleavage-site. Disordered stretches follow at residues 1260 to 1284 (PIGC…SDHV) and 1297 to 1409 (DDAA…RQRN). 2 stretches are compositionally biased toward low complexity: residues 1264–1273 (SNSSSSSSKS) and 1300–1310 (ASVSASTPAPS).

As to quaternary structure, interacts with pim and Sse. Cleavage of thr contributes to inactivation of Sse.

Its subcellular location is the cytoplasm. Required specifically for chromosome disjunction during all mitoses; maternally provided protein is sufficient until mitosis 14 then zygotic protein is required. Involved in formation and/or maintenance of epithelial structures: bud extension during Malpighian tubule development, and foregut and hindgut morphogenesis. This is Protein three rows (thr) from Drosophila pseudoobscura pseudoobscura (Fruit fly).